Consider the following 393-residue polypeptide: Serpin-Z4 (393 aa).

Positions 342–366 are RCL; sequence GTEAAAVSVASMTKDMLLMGDFVAD.

It belongs to the serpin family.

Functionally, probable serine protease inhibitor. The protein is Serpin-Z4 of Arabidopsis thaliana (Mouse-ear cress).